A 106-amino-acid polypeptide reads, in one-letter code: Thioredoxin (106 aa).

Lys3 bears the N6-acetyllysine mark. The region spanning 3–106 is the Thioredoxin domain; sequence KQIESKTAFQ…KLEATINELV (104 aa). Residue Lys8 is modified to N6-succinyllysine. Residues Cys32 and Cys35 each act as nucleophile in the active site. A disulfide bond links Cys32 and Cys35. N6-acetyllysine is present on Lys39. S-nitrosocysteine occurs at positions 62 and 69. At Cys73 the chain carries S-nitrosocysteine; alternate. At Lys95 the chain carries N6-acetyllysine; alternate. Lys95 carries the N6-succinyllysine; alternate modification.

This sequence belongs to the thioredoxin family. In terms of assembly, homodimer; disulfide-linked. Interacts with TXNIP through the redox-active site. Interacts with MAP3K5 and CASP3. Interacts with APEX1; the interaction stimulates the FOS/JUN AP-1 DNA-binding activity in a redox-dependent manner. In terms of processing, in the fully reduced protein, both Cys-69 and Cys-73 are nitrosylated in response to nitric oxide (NO). When two disulfide bonds are present in the protein, only Cys-73 is nitrosylated. Cys-73 can serve as donor for nitrosylation of target proteins.

Its subcellular location is the nucleus. It is found in the cytoplasm. It localises to the secreted. Functionally, participates in various redox reactions through the reversible oxidation of its active center dithiol to a disulfide and catalyzes dithiol-disulfide exchange reactions. Plays a role in the reversible S-nitrosylation of cysteine residues in target proteins, and thereby contributes to the response to intracellular nitric oxide. Nitrosylates the active site Cys of CASP3 in response to nitric oxide (NO), and thereby inhibits caspase-3 activity. Induces the FOS/JUN AP-1 DNA binding activity in ionizing radiation (IR) cells through its oxidation/reduction status and stimulates AP-1 transcriptional activity. This chain is Thioredoxin (TXN), found in Pongo abelii (Sumatran orangutan).